Consider the following 341-residue polypeptide: Protein quaking-A (341 aa).

One can recognise a KH domain in the interval 87-153 (FVPVKEYPDY…WEHLNEDLHV (67 aa)). Positions 276–279 (PPTP) match the SH3-binding motif. The Nuclear localization signal signature appears at 324-330 (RVHPYQR).

This sequence belongs to the quaking family. Homodimer; does not require RNA to homodimerize.

The protein resides in the cytoplasm. It is found in the nucleus. In terms of biological role, RNA reader protein, which recognizes and binds specific RNAs, thereby regulating RNA metabolic processes, such as pre-mRNA splicing, circular RNA (circRNA) formation, mRNA export, mRNA stability and/or translation. Involved in various cellular processes, such as mRNA storage into stress granules, apoptosis, interferon response, glial cell fate and development. Binds to the 5'-NACUAAY-N(1,20)-UAAY-3' RNA core sequence. Acts as a mRNA modification reader that specifically recognizes and binds mRNA transcripts modified by internal N(7)-methylguanine (m7G). Promotes the formation of circular RNAs (circRNAs): acts by binding to sites flanking circRNA-forming exons. CircRNAs are produced by back-splicing circularization of pre-mRNAs. Required to protect and promote stability of mRNAs which promotes oligodendrocyte differentiation. Acts as an important regulator of muscle development: required during early skeletal myofibril formation by regulating the accumulation of the muscle-specific tropomyosin-3 (tpm3) transcripts. In Danio rerio (Zebrafish), this protein is Protein quaking-A.